A 218-amino-acid chain; its full sequence is MLEAKNLTCIRDDRCLFQQLSFCIAPGEIVQIEGPNGAGKTSLLRILAGLAEADEGQVNWRDKNIRRDRAKYHQDLLFLGHQPGIKSVLTPFENLLFYQSVFQKVDSAAIWQALAQVGLVGYEDLPVSQLSAGQQRRVALARLWLSPAPLWILDEPLTAIDKQGVSTLLALFVQHAAKGGMVLLTTHQDLGAVSHNVRKICLANTQEKSCLSACCAVN.

The ABC transporter domain maps to 2–217; the sequence is LEAKNLTCIR…KSCLSACCAV (216 aa). An ATP-binding site is contributed by 34-41; it reads GPNGAGKT.

The protein belongs to the ABC transporter superfamily. CcmA exporter (TC 3.A.1.107) family. As to quaternary structure, the complex is composed of two ATP-binding proteins (CcmA) and two transmembrane proteins (CcmB).

Its subcellular location is the cell inner membrane. It carries out the reaction heme b(in) + ATP + H2O = heme b(out) + ADP + phosphate + H(+). Its function is as follows. Part of the ABC transporter complex CcmAB involved in the biogenesis of c-type cytochromes; once thought to export heme, this seems not to be the case, but its exact role is uncertain. Responsible for energy coupling to the transport system. The chain is Cytochrome c biogenesis ATP-binding export protein CcmA from Yersinia pestis.